The primary structure comprises 501 residues: Glycerol kinase (501 aa).

Residue Thr12 participates in ADP binding. ATP-binding residues include Thr12, Thr13, and Ser14. Sn-glycerol 3-phosphate is bound at residue Thr12. ADP is bound at residue Arg16. 4 residues coordinate sn-glycerol 3-phosphate: Arg82, Glu83, Tyr135, and Asp244. Positions 82, 83, 135, 244, and 245 each coordinate glycerol. The ADP site is built by Thr266, Gly309, Gly409, and Asn413. The ATP site is built by Thr266, Gly309, and Gly409.

It belongs to the FGGY kinase family.

It catalyses the reaction glycerol + ATP = sn-glycerol 3-phosphate + ADP + H(+). The protein operates within polyol metabolism; glycerol degradation via glycerol kinase pathway; sn-glycerol 3-phosphate from glycerol: step 1/1. Its activity is regulated as follows. Inhibited by fructose 1,6-bisphosphate (FBP). Functionally, key enzyme in the regulation of glycerol uptake and metabolism. Catalyzes the phosphorylation of glycerol to yield sn-glycerol 3-phosphate. The polypeptide is Glycerol kinase (Coxiella burnetii (strain RSA 331 / Henzerling II)).